Here is a 274-residue protein sequence, read N- to C-terminus: 2,3,4,5-tetrahydropyridine-2,6-dicarboxylate N-succinyltransferase (274 aa).

Substrate contacts are provided by R104 and D141.

Belongs to the transferase hexapeptide repeat family. As to quaternary structure, homotrimer.

The protein resides in the cytoplasm. It carries out the reaction (S)-2,3,4,5-tetrahydrodipicolinate + succinyl-CoA + H2O = (S)-2-succinylamino-6-oxoheptanedioate + CoA. It participates in amino-acid biosynthesis; L-lysine biosynthesis via DAP pathway; LL-2,6-diaminopimelate from (S)-tetrahydrodipicolinate (succinylase route): step 1/3. This is 2,3,4,5-tetrahydropyridine-2,6-dicarboxylate N-succinyltransferase from Shewanella halifaxensis (strain HAW-EB4).